The sequence spans 507 residues: Cytochrome P450 52A7 (507 aa).

The chain crosses the membrane as a helical span at residues 6 to 26; the sequence is LHYWYYVLPAFIIFHWIVSAI. Residue cysteine 456 coordinates heme.

Belongs to the cytochrome P450 family. It depends on heme as a cofactor.

It localises to the membrane. Its function is as follows. Together with an NADPH cytochrome P450 the enzyme system catalyzes the terminal hydroxylation as the first step in the assimilation of alkanes and fatty acids. Preferentially hydroxylates lauric acid. The protein is Cytochrome P450 52A7 (CYP52A7) of Candida tropicalis (Yeast).